A 293-amino-acid polypeptide reads, in one-letter code: tRNA (guanine(9)-N1)-methyltransferase (293 aa).

A disordered region spans residues 1-31 (MSNDEINQNEEKVKRTPPLPPVPEGMSKKQW). T16 is subject to Phosphothreonine. The stretch at 32 to 61 (KKMCKRQRWEENKAKYNAERRVKKKRLRHE) forms a coiled coil. The region spanning 83–279 (EPRINVNQTD…SVLPPRKLDA (197 aa)) is the SAM-dependent MTase TRM10-type domain. Residues 186–187 (LT), G206, 210–214 (DKNRY), C218, L232, and 244–246 (RVL) each bind S-adenosyl-L-methionine. D210 functions as the Proton acceptor in the catalytic mechanism. A Phosphoserine modification is found at S283.

The protein belongs to the class IV-like SAM-binding methyltransferase superfamily. TRM10 family. Monomer.

It is found in the cytoplasm. The protein resides in the nucleus. It catalyses the reaction guanosine(9) in tRNA + S-adenosyl-L-methionine = N(1)-methylguanosine(9) in tRNA + S-adenosyl-L-homocysteine + H(+). Functionally, S-adenosyl-L-methionine-dependent guanine N(1)-methyltransferase that catalyzes the formation of N(1)-methylguanine at position 9 (m1G9) in cytoplasmic tRNAs. The protein is tRNA (guanine(9)-N1)-methyltransferase of Saccharomyces cerevisiae (strain ATCC 204508 / S288c) (Baker's yeast).